The following is a 717-amino-acid chain: Radial spoke head protein 6 homolog A (717 aa).

4 disordered regions span residues 1–65, 503–523, 563–588, and 672–717; these read MGDL…SLSQ, SEEEGDEEEEGGAGRDSYEEN, TEEEEDLGEEEEKADEGPEEVEQEVG, and GPEI…ETDD. Composition is skewed to acidic residues over residues 503 to 513, 564 to 585, and 700 to 717; these read SEEEGDEEEEG, EEEEDLGEEEEKADEGPEEVEQ, and TEEEEEGEEEEEGEETDD.

Belongs to the flagellar radial spoke RSP4/6 family. In terms of assembly, component of the axonemal radial spoke 1 (RS1) and 2 (RS2) complexes, at least composed of spoke head proteins RSPH1, RSPH3, RSPH9 and the cilia-specific component RSPH4A or sperm-specific component RSPH6A, spoke stalk proteins RSPH14, DNAJB13, DYDC1, ROPN1L and NME5, and the RS1 complex-specific anchor protein IQUB. Interacts with RSPH1. Interacts with RSPH3B. Interacts with RSPH4A. Interacts with RSPH9. Interacts with RSPH10B. In terms of processing, phosphorylated by PKA. Phosphorylation increases in capacitated sperm.

The protein localises to the cytoplasm. It localises to the cytoskeleton. The protein resides in the flagellum axoneme. In terms of biological role, functions as part of radial spoke complexes in the axoneme of sperm flagella that play an important part in motility. The triple radial spokes (RS1, RS2 and RS3) are required to modulate beating of the sperm flagellum. This is Radial spoke head protein 6 homolog A from Homo sapiens (Human).